We begin with the raw amino-acid sequence, 34 residues long: Photosystem II reaction center protein M (34 aa).

The helical transmembrane segment at 5 to 25 (ILAFIATALFILVPTAFLLII) threads the bilayer.

The protein belongs to the PsbM family. PSII is composed of 1 copy each of membrane proteins PsbA, PsbB, PsbC, PsbD, PsbE, PsbF, PsbH, PsbI, PsbJ, PsbK, PsbL, PsbM, PsbT, PsbX, PsbY, PsbZ, Psb30/Ycf12, at least 3 peripheral proteins of the oxygen-evolving complex and a large number of cofactors. It forms dimeric complexes.

The protein resides in the plastid. Its subcellular location is the chloroplast thylakoid membrane. One of the components of the core complex of photosystem II (PSII). PSII is a light-driven water:plastoquinone oxidoreductase that uses light energy to abstract electrons from H(2)O, generating O(2) and a proton gradient subsequently used for ATP formation. It consists of a core antenna complex that captures photons, and an electron transfer chain that converts photonic excitation into a charge separation. This subunit is found at the monomer-monomer interface. The protein is Photosystem II reaction center protein M of Ceratophyllum demersum (Rigid hornwort).